The following is a 367-amino-acid chain: Inactive serine protease 39 (367 aa).

Positions 1–31 are cleaved as a signal peptide; that stretch reads MWGSRAQQSGPDRGGACLLAAFLLCFSLLHA. One can recognise a Peptidase S1 domain in the interval 68–312; it reads IYGGQIAKAE…FSDWIKQKKA (245 aa). 4 disulfides stabilise this stretch: Cys93–Cys109, Cys192–Cys269, Cys225–Cys248, and Cys259–Cys287.

This sequence belongs to the peptidase S1 family. In terms of tissue distribution, expressed in testis. More specifically, abundantly expressed in the haploid round spermatid.

The protein localises to the cytoplasmic vesicle. The protein resides in the secretory vesicle. Its subcellular location is the acrosome. It is found in the secreted. Its function is as follows. May play an important role in the sperm/egg interaction; released during the acrosome reaction. The polypeptide is Inactive serine protease 39 (Prss39) (Mus musculus (Mouse)).